Here is a 374-residue protein sequence, read N- to C-terminus: Pectate lyase 2 (374 aa).

The signal sequence occupies residues 1-22 (MKYLLPTAATGLLLLAAQPAVA). A disulfide bridge connects residues Cys-93 and Cys-176. Residues Asp-150, Asp-152, Glu-187, and Asp-191 each coordinate Ca(2+). Arg-239 is a catalytic residue. Cys-350 and Cys-373 are joined by a disulfide.

Belongs to the polysaccharide lyase 1 family. PLADES subfamily. Ca(2+) is required as a cofactor.

The protein localises to the secreted. The enzyme catalyses Eliminative cleavage of (1-&gt;4)-alpha-D-galacturonan to give oligosaccharides with 4-deoxy-alpha-D-galact-4-enuronosyl groups at their non-reducing ends.. Its pathway is glycan metabolism; pectin degradation; 2-dehydro-3-deoxy-D-gluconate from pectin: step 2/5. Its function is as follows. Involved in maceration and soft-rotting of plant tissue. The polypeptide is Pectate lyase 2 (pel2) (Pectobacterium atrosepticum (strain SCRI 1043 / ATCC BAA-672) (Erwinia carotovora subsp. atroseptica)).